A 316-amino-acid polypeptide reads, in one-letter code: N-acetylmuramic acid 6-phosphate etherase (316 aa).

In terms of domain architecture, SIS spans 68 to 231 (ITDRLRSGGR…STCAMVRLGK (164 aa)). Residue Glu96 is the Proton donor of the active site. Glu127 is an active-site residue.

This sequence belongs to the GCKR-like family. MurNAc-6-P etherase subfamily. As to quaternary structure, homodimer.

The enzyme catalyses N-acetyl-D-muramate 6-phosphate + H2O = N-acetyl-D-glucosamine 6-phosphate + (R)-lactate. It functions in the pathway amino-sugar metabolism; N-acetylmuramate degradation. Specifically catalyzes the cleavage of the D-lactyl ether substituent of MurNAc 6-phosphate, producing GlcNAc 6-phosphate and D-lactate. The polypeptide is N-acetylmuramic acid 6-phosphate etherase (Prochlorococcus marinus (strain MIT 9303)).